The chain runs to 429 residues: Adenylosuccinate synthetase (429 aa).

GTP-binding positions include 12-18 (GDEGKGK) and 40-42 (GHT). The active-site Proton acceptor is the aspartate 13. Mg(2+)-binding residues include aspartate 13 and glycine 40. Residues 13–16 (DEGK), 38–41 (NAGH), threonine 128, arginine 142, glutamine 223, threonine 238, and arginine 302 contribute to the IMP site. Histidine 41 functions as the Proton donor in the catalytic mechanism. 298-304 (TTTGRPR) contacts substrate. Residues arginine 304, 330-332 (SID), and 412-414 (SVG) each bind GTP.

This sequence belongs to the adenylosuccinate synthetase family. Homodimer. Mg(2+) is required as a cofactor.

It localises to the cytoplasm. The catalysed reaction is IMP + L-aspartate + GTP = N(6)-(1,2-dicarboxyethyl)-AMP + GDP + phosphate + 2 H(+). It functions in the pathway purine metabolism; AMP biosynthesis via de novo pathway; AMP from IMP: step 1/2. Its function is as follows. Plays an important role in the de novo pathway of purine nucleotide biosynthesis. Catalyzes the first committed step in the biosynthesis of AMP from IMP. This is Adenylosuccinate synthetase from Bacillus cereus (strain ATCC 14579 / DSM 31 / CCUG 7414 / JCM 2152 / NBRC 15305 / NCIMB 9373 / NCTC 2599 / NRRL B-3711).